Reading from the N-terminus, the 1553-residue chain is Mediator of RNA polymerase II transcription subunit 14 (1553 aa).

2 consecutive short sequence motifs (LXXLL motif) follow at residues 55–59 (LAELL) and 472–476 (LPALL). Ser615 carries the post-translational modification Phosphoserine. Disordered stretches follow at residues 699 to 723 (FATQQQQQQGAPAVAGENKPSGTSG), 1006 to 1199 (ASHE…LNRP), and 1513 to 1553 (GVGS…GGPQ). Ser1015 carries the post-translational modification Phosphoserine. 2 stretches are compositionally biased toward low complexity: residues 1024-1039 (GGPSSVAGVSAGGSSP) and 1065-1080 (PSSSNPHTPASPHPSA). Residues 1081–1090 (GAGGGSGPQG) show a composition bias toward gly residues. The span at 1099-1108 (PPAPHMPHPS) shows a compositional bias: pro residues. A compositionally biased stretch (polar residues) spans 1131-1155 (GPNTLYMQSHQDSPFTAMSPANNNW). Over residues 1159-1169 (PSMPRPSPRPG) the composition is skewed to pro residues. Residues 1177–1193 (TGGGAGVAGGTDRGGSR) are compositionally biased toward gly residues. A compositionally biased stretch (low complexity) spans 1515 to 1534 (GSSPNPMMPMQQLPQQVGPQ).

The protein belongs to the Mediator complex subunit 14 family. As to quaternary structure, component of the Mediator complex, which may include CDK8, MED4, MED6, MED11, MED14, MED17, MED18, MED20, MED21, MED22, MED27, MED28, MED30 and MED31.

Its subcellular location is the nucleus. Component of the Mediator complex, a coactivator involved in the regulated transcription of nearly all RNA polymerase II-dependent genes. Mediator functions as a bridge to convey information from gene-specific regulatory proteins to the basal RNA polymerase II transcription machinery. Mediator is recruited to promoters by direct interactions with regulatory proteins and serves as a scaffold for the assembly of a functional pre-initiation complex with RNA polymerase II and the general transcription factors. Required for activated transcription of the MtnA, MtnB and MtnD genes. This is Mediator of RNA polymerase II transcription subunit 14 (MED14) from Drosophila melanogaster (Fruit fly).